Reading from the N-terminus, the 282-residue chain is Glutamate--LysW ligase ArgX (282 aa).

ATP is bound by residues lysine 87, lysine 127, 131–137 (GSWGRLV), and 167–178 (QEYINYKSRDIR). Positions 91-277 (YSKLYREGIP…VAEELVSYVK (187 aa)) constitute an ATP-grasp domain. A substrate-binding site is contributed by arginine 192. Position 202 (asparagine 202) interacts with ATP. A substrate-binding site is contributed by 203–204 (IA). Positions 237, 250, and 252 each coordinate Mg(2+). Position 256 to 260 (256 to 260 (EFKGF)) interacts with substrate. Residues 259-260 (GF) carry the GF motif that is essential for ArgX substrate specificity motif.

This sequence belongs to the RimK family. LysX subfamily. As to quaternary structure, homotetramer. Interacts with LysW. Mg(2+) is required as a cofactor.

The catalysed reaction is [amino-group carrier protein]-C-terminal-L-glutamate + L-glutamate + ATP = [amino-group carrier protein]-C-terminal-gamma-(L-glutamyl)-L-glutamate + ADP + phosphate + H(+). It functions in the pathway amino-acid biosynthesis; L-arginine biosynthesis. Functionally, catalyzes the ATP-dependent formation of a covalent bond between the amino group of glutamate and the gamma-carboxyl group of the C-terminal glutamate residue in LysW. This Sulfolobus acidocaldarius (strain ATCC 33909 / DSM 639 / JCM 8929 / NBRC 15157 / NCIMB 11770) protein is Glutamate--LysW ligase ArgX.